Consider the following 372-residue polypeptide: Dual-specificity RNA methyltransferase RlmN (372 aa).

Glu-94 functions as the Proton acceptor in the catalytic mechanism. The Radical SAM core domain occupies 100–339; the sequence is DGDRATLCVS…VTIRKTRGDD (240 aa). A disulfide bridge links Cys-107 with Cys-344. 3 residues coordinate [4Fe-4S] cluster: Cys-114, Cys-118, and Cys-121. S-adenosyl-L-methionine contacts are provided by residues 168 to 169, Ser-200, 222 to 224, and Asn-301; these read GE and SLH. Cys-344 functions as the S-methylcysteine intermediate in the catalytic mechanism.

The protein belongs to the radical SAM superfamily. RlmN family. The cofactor is [4Fe-4S] cluster.

Its subcellular location is the cytoplasm. The catalysed reaction is adenosine(2503) in 23S rRNA + 2 reduced [2Fe-2S]-[ferredoxin] + 2 S-adenosyl-L-methionine = 2-methyladenosine(2503) in 23S rRNA + 5'-deoxyadenosine + L-methionine + 2 oxidized [2Fe-2S]-[ferredoxin] + S-adenosyl-L-homocysteine. The enzyme catalyses adenosine(37) in tRNA + 2 reduced [2Fe-2S]-[ferredoxin] + 2 S-adenosyl-L-methionine = 2-methyladenosine(37) in tRNA + 5'-deoxyadenosine + L-methionine + 2 oxidized [2Fe-2S]-[ferredoxin] + S-adenosyl-L-homocysteine. Its function is as follows. Specifically methylates position 2 of adenine 2503 in 23S rRNA and position 2 of adenine 37 in tRNAs. m2A2503 modification seems to play a crucial role in the proofreading step occurring at the peptidyl transferase center and thus would serve to optimize ribosomal fidelity. In Aliivibrio fischeri (strain ATCC 700601 / ES114) (Vibrio fischeri), this protein is Dual-specificity RNA methyltransferase RlmN.